A 580-amino-acid polypeptide reads, in one-letter code: Probable inactive 1-aminocyclopropane-1-carboxylate synthase-like protein 2 (580 aa).

The interval 1-43 is disordered; it reads MSENRNEGSSQAAKANSDTQTPSHFKVTHPRLRDQLKKKSSKK. Polar residues predominate over residues 7–23; it reads EGSSQAAKANSDTQTPS. Lysine 417 carries the N6-(pyridoxal phosphate)lysine modification.

It belongs to the class-I pyridoxal-phosphate-dependent aminotransferase family.

This chain is Probable inactive 1-aminocyclopropane-1-carboxylate synthase-like protein 2 (Accsl), found in Mus musculus (Mouse).